The sequence spans 151 residues: MEYKKIIAQNKKALFNYFIEERLEAGIVLKGSEVQSLRQGKASIEESHAADTGNEVFLYNCHIAEYEKANRFNHSTRRPRKLLLHKKEINKIIGRTKIKGYTLVALSMYFNKKNKIKIELGIAKGKKLHDKRESIKEKDWKRDQSRLIRQK.

The tract at residues 131–151 (KRESIKEKDWKRDQSRLIRQK) is disordered.

It belongs to the SmpB family.

It localises to the cytoplasm. Its function is as follows. Required for rescue of stalled ribosomes mediated by trans-translation. Binds to transfer-messenger RNA (tmRNA), required for stable association of tmRNA with ribosomes. tmRNA and SmpB together mimic tRNA shape, replacing the anticodon stem-loop with SmpB. tmRNA is encoded by the ssrA gene; the 2 termini fold to resemble tRNA(Ala) and it encodes a 'tag peptide', a short internal open reading frame. During trans-translation Ala-aminoacylated tmRNA acts like a tRNA, entering the A-site of stalled ribosomes, displacing the stalled mRNA. The ribosome then switches to translate the ORF on the tmRNA; the nascent peptide is terminated with the 'tag peptide' encoded by the tmRNA and targeted for degradation. The ribosome is freed to recommence translation, which seems to be the essential function of trans-translation. The protein is SsrA-binding protein of Rickettsia bellii (strain OSU 85-389).